We begin with the raw amino-acid sequence, 553 residues long: Arginine--tRNA ligase (553 aa).

Positions 130–140 (ANPTGDLHIGH) match the 'HIGH' region motif.

This sequence belongs to the class-I aminoacyl-tRNA synthetase family. Monomer.

It is found in the cytoplasm. It carries out the reaction tRNA(Arg) + L-arginine + ATP = L-arginyl-tRNA(Arg) + AMP + diphosphate. The chain is Arginine--tRNA ligase from Staphylococcus aureus (strain MRSA252).